The sequence spans 913 residues: Epithelial discoidin domain-containing receptor 1 (913 aa).

The signal sequence occupies residues 1–18; sequence MGPEALSSLLLLLLVASG. Topologically, residues 21 to 417 are extracellular; it reads DMKGHFDPAK…VAKAEGSPTA (397 aa). The region spanning 31–185 is the F5/8 type C domain; that stretch reads CRYALGMQDR…VCLRVELYGC (155 aa). Cystine bridges form between Cys31–Cys185 and Cys74–Cys177. The DS-like domain stretch occupies residues 192–367; that stretch reads LSYTAPVGQT…LFSEISFISD (176 aa). Ca(2+)-binding residues include Asn211, Gln230, Asp233, Val235, Tyr253, and Tyr255. An N-linked (GlcNAc...) asparagine glycan is attached at Asn211. Residue Asn260 is glycosylated (N-linked (GlcNAc...) asparagine). Residues Cys303 and Cys348 are joined by a disulfide bond. The Ca(2+) site is built by Ser360 and Glu361. 2 N-linked (GlcNAc...) asparagine glycosylation sites follow: Asn370 and Asn394. The chain crosses the membrane as a helical span at residues 418–438; it reads ILIGCLVAIILLLLLIIALML. Residues 439-913 lie on the Cytoplasmic side of the membrane; the sequence is WRLHWRRLLS…FLAEDALNTV (475 aa). Residues 470 to 499 are disordered; that stretch reads ILINNRPGPREPPPYQEPRPRGNPPHSAPC. A compositionally biased stretch (pro residues) spans 479 to 496; that stretch reads REPPPYQEPRPRGNPPHS. Residues 481–484 carry the PPxY motif motif; the sequence is PPPY. Residues Tyr484, Tyr513, and Tyr520 each carry the phosphotyrosine; by autocatalysis modification. Residues 610–905 enclose the Protein kinase domain; the sequence is LRFKEKLGEG…PPFSQLHRFL (296 aa). 616 to 624 provides a ligand contact to ATP; sequence LGEGQFGEV. Ser631 carries the post-translational modification Phosphoserine. Lys655 provides a ligand contact to ATP. A Phosphotyrosine; by autocatalysis modification is found at Tyr740. The active-site Proton acceptor is the Asp766. A phosphotyrosine; by autocatalysis mark is found at Tyr792, Tyr796, and Tyr797.

It belongs to the protein kinase superfamily. Tyr protein kinase family. Insulin receptor subfamily. Homodimer. Interacts (via PPxY motif) with WWC1 (via WW domains) in a collagen-regulated manner. Forms a tripartite complex with WWC1 and PRKCZ, but predominantly in the absence of collagen. Interacts (tyrosine phosphorylated) with SHC1. Interacts with SRC. Interacts with MYH9. Interacts with CDH1. Interacts with PTPN11. Interacts with NCK2. Post-translationally, autophosphorylated in response to fibrillar collagen binding. Glycosylation of Asn-211, but apparently not of Asn-260 or Asn-394, prevents autophosphorylation from occurring in the absence of collagen. In terms of tissue distribution, detected in T-47D, MDA-MB-175 and HBL-100 breast carcinoma cells, A-431 epidermoid carcinoma cells, SW48 and SNU-C2B colon carcinoma cells and Hs 294T melanoma cells (at protein level). Expressed at low levels in most adult tissues and is highest in the brain, lung, placenta and kidney. Lower levels of expression are detected in melanocytes, heart, liver, skeletal muscle and pancreas. Abundant in breast carcinoma cell lines. In the colonic mucosa, expressed in epithelia but not in the connective tissue of the lamina propria. In the thyroid gland, expressed in the epithelium of the thyroid follicles. In pancreas, expressed in the islets of Langerhans cells, but not in the surrounding epithelial cells of the exocrine pancreas. In kidney, expressed in the epithelia of the distal tubules. Not expressed in connective tissue, endothelial cells, adipose tissue, muscle cells or cells of hematopoietic origin.

The protein resides in the cell membrane. The protein localises to the secreted. The enzyme catalyses L-tyrosyl-[protein] + ATP = O-phospho-L-tyrosyl-[protein] + ADP + H(+). With respect to regulation, inhibited by the multi-targeted cancer drugs imatinib and ponatinib. Tyrosine kinase that functions as a cell surface receptor for fibrillar collagen and regulates cell attachment to the extracellular matrix, remodeling of the extracellular matrix, cell migration, differentiation, survival and cell proliferation. Collagen binding triggers a signaling pathway that involves SRC and leads to the activation of MAP kinases. Regulates remodeling of the extracellular matrix by up-regulation of the matrix metalloproteinases MMP2, MMP7 and MMP9, and thereby facilitates cell migration and wound healing. Required for normal blastocyst implantation during pregnancy, for normal mammary gland differentiation and normal lactation. Required for normal ear morphology and normal hearing. Promotes smooth muscle cell migration, and thereby contributes to arterial wound healing. Also plays a role in tumor cell invasion. Phosphorylates PTPN11. This chain is Epithelial discoidin domain-containing receptor 1 (DDR1), found in Homo sapiens (Human).